Reading from the N-terminus, the 75-residue chain is Small integral membrane protein 7 (75 aa).

An N-terminal signal peptide occupies residues 1–17 (MIGDILLFGTLLMNAGA). The Extracellular portion of the chain corresponds to 18–53 (VLNFKLKKKDTQGFGEESKEPSTGDNIREFLLSLRY). The chain crosses the membrane as a helical span at residues 54 to 74 (FRIFIALWNVFMMLCMIVLFG). A topological domain (cytoplasmic) is located at residue S75.

The protein belongs to the SMIM7 family.

The protein resides in the membrane. This is Small integral membrane protein 7 (Smim7) from Mus musculus (Mouse).